The chain runs to 276 residues: 2-dehydro-3-deoxyphosphooctonate aldolase (276 aa).

The protein belongs to the KdsA family.

The protein localises to the cytoplasm. It catalyses the reaction D-arabinose 5-phosphate + phosphoenolpyruvate + H2O = 3-deoxy-alpha-D-manno-2-octulosonate-8-phosphate + phosphate. It functions in the pathway carbohydrate biosynthesis; 3-deoxy-D-manno-octulosonate biosynthesis; 3-deoxy-D-manno-octulosonate from D-ribulose 5-phosphate: step 2/3. It participates in bacterial outer membrane biogenesis; lipopolysaccharide biosynthesis. The chain is 2-dehydro-3-deoxyphosphooctonate aldolase from Chelativorans sp. (strain BNC1).